We begin with the raw amino-acid sequence, 399 residues long: Transaminase BacF (399 aa).

Residues 103–104 (GK), Tyr128, Asn178, Tyr209, and 236–238 (SFS) each bind pyridoxal 5'-phosphate. Lys239 carries the N6-(pyridoxal phosphate)lysine modification. Position 247 (Arg247) interacts with pyridoxal 5'-phosphate.

This sequence belongs to the class-I pyridoxal-phosphate-dependent aminotransferase family. Homodimer. Pyridoxal 5'-phosphate is required as a cofactor.

It localises to the cytoplasm. It functions in the pathway antibiotic biosynthesis; bacilysin biosynthesis. Part of the bacABCDEF operon responsible for the biosynthesis of the nonribosomally synthesized dipeptide antibiotic bacilysin, composed of L-alanine and L-anticapsin. Bacilysin is an irreversible inactivator of the glutaminase domain of glucosamine synthetase. Catalyzes the reductive amination of the C2 ketone of tetrahydro-hydroxyphenylpyruvate (H4HPP), with L-Phe as an amino donor, to yield tetrahydrotyrosine (H4Tyr) diastereomer. D-Phe is not an effective amino donor. BacF associated to BacG converts 3E,7R- and 3Z,7R-ex-H2HPP to 2S,4R,7R- and 2S,4S,7R-H4Tyr, respectively. Given that bacilysin has the 2S,4S stereochemistry in its anticapsin moiety, it is likely that the 2S,4S-H4Tyr is the diastereomer used for the biosynthesis. The protein is Transaminase BacF of Bacillus subtilis (strain 168).